Here is a 124-residue protein sequence, read N- to C-terminus: Large ribosomal subunit protein bL12 (124 aa).

The protein belongs to the bacterial ribosomal protein bL12 family. As to quaternary structure, homodimer. Part of the ribosomal stalk of the 50S ribosomal subunit. Forms a multimeric L10(L12)X complex, where L10 forms an elongated spine to which 2 to 4 L12 dimers bind in a sequential fashion. Binds GTP-bound translation factors.

Functionally, forms part of the ribosomal stalk which helps the ribosome interact with GTP-bound translation factors. Is thus essential for accurate translation. The polypeptide is Large ribosomal subunit protein bL12 (Bacteroides thetaiotaomicron (strain ATCC 29148 / DSM 2079 / JCM 5827 / CCUG 10774 / NCTC 10582 / VPI-5482 / E50)).